Consider the following 330-residue polypeptide: Olfactory receptor 1P1 (330 aa).

The Extracellular segment spans residues 1–39; the sequence is MGLTQDFFPPTSELLEGGNQTSTFEFLLWGLSDQPQQQH. Asn19 carries an N-linked (GlcNAc...) asparagine glycan. A helical transmembrane segment spans residues 40–60; it reads IFFLLFLWMYVVTVAGNLLIV. Residues 61–71 are Cytoplasmic-facing; that stretch reads LAIGTDTHLHT. The chain crosses the membrane as a helical span at residues 72–92; sequence PMYFFLASLSCADIFSTSTTV. The Extracellular portion of the chain corresponds to 93–111; sequence PKALVNIQTQSRSISYAGC. The cysteines at positions 111 and 192 are disulfide-linked. Residues 112–132 traverse the membrane as a helical segment; that stretch reads LAQLYFFLTFGDMDIFLPATM. Residues 133–137 lie on the Cytoplasmic side of the membrane; that stretch reads AYDRY. The helical transmembrane segment at 138 to 158 threads the bilayer; sequence VAICHLLHYMMIMSLHRCAFL. Residues 159–209 lie on the Extracellular side of the membrane; it reads VTACWTLTSLLAMTRTFLIFRLSLCSKILPGFFCDLGPLMKVSCSDAQVNE. Residues 210–230 form a helical membrane-spanning segment; that stretch reads LVLLFLGGAVILIPFMLILVS. Residues 231–257 are Cytoplasmic-facing; it reads YIRIVSAILRAPSAQGRRKAFSTCDSH. Residues 258–278 form a helical membrane-spanning segment; it reads LVVVALFFGTVIRAYLCPSSS. The Extracellular segment spans residues 279–286; that stretch reads SSNSVKED. Residues 287 to 307 traverse the membrane as a helical segment; sequence TAAAVMYTVVTPLLNPFIYSM. Over 308–330 the chain is Cytoplasmic; sequence RNKDMKAAVVRLLKGRVSFSQGQ.

It belongs to the G-protein coupled receptor 1 family.

It is found in the cell membrane. In terms of biological role, odorant receptor. This is Olfactory receptor 1P1 (OR1P1) from Homo sapiens (Human).